Here is a 593-residue protein sequence, read N- to C-terminus: Numb-related protein 1 (593 aa).

Disordered regions lie at residues 1–97, 235–278, 331–375, and 493–581; these read MSAS…WQPD, TAQV…NSRS, LRQG…FGTQ, and MSMS…DPFD. The residue at position 17 (Ser17) is a Phosphoserine; by PKC. Polar residues predominate over residues 27–37; the sequence is QNSLVSEQQPS. Positions 64 to 74 are enriched in basic residues; that stretch reads RSLRLPKKRRD. Ser65 is subject to Phosphoserine; by PKC. The region spanning 102-255 is the PID domain; the sequence is RTGTCCFNVK…STSSTPPKDI (154 aa). 3 stretches are compositionally biased toward polar residues: residues 236 to 251, 261 to 278, and 354 to 364; these read AQVNVQSAQESTSSTP, EDNTSEGTSTQNPSNSRS, and SLRTVSNNPTE. Over residues 493 to 511 the composition is skewed to low complexity; that stretch reads MSMSPTSPSSDPPSTSSYS. Pro residues predominate over residues 516–528; that stretch reads SGPPPAHAPPPLP. Residues 532 to 565 are compositionally biased toward polar residues; it reads AVSNGSPSIYQQQLQQANSTRNSPAGINWNSSPN.

As to quaternary structure, interacts with pkc-3. In terms of tissue distribution, expressed in cells comprising the intestine, pharyngeal cells, the anal sphincter and depressor muscles.

The protein localises to the cytoplasm. Its subcellular location is the cell cortex. The protein resides in the cytoskeleton. It localises to the membrane. Functionally, involved in the tethering and targeting of pkc-3 to modulate the intracellular distribution of the kinase. The complex formed with pkc-3 complexes are likely to be involved in assembly, maintenance, and/or regulation of protein complexes that execute asymmetric and/or polarized cell functions. The protein is Numb-related protein 1 of Caenorhabditis elegans.